The primary structure comprises 140 residues: Ubiquitin-like protein ATG12 (140 aa).

Residues 1–52 (MAEEPQTVLQLPPSSAAGGEGLTDVSPETTTPEPPSSAAVSPGTEEPAGDTK) form a disordered region. The segment covering 25 to 42 (VSPETTTPEPPSSAAVSP) has biased composition (low complexity). G140 participates in a covalent cross-link: Glycyl lysine isopeptide (Gly-Lys) (interchain with K-? in acceptor protein).

It belongs to the ATG12 family. In terms of assembly, forms a conjugate with ATG5. Part of the minor complex composed of 4 sets of ATG12-ATG5 and ATG16L1 (400 kDa); this complex interacts with ATG3 leading to disruption of ATG7 interaction and promotion of ATG8-like proteins lipidation. Forms an 800-kDa complex composed of ATG12-ATG5 and ATG16L2. Interacts with DHX58/RIG-1, IFIH1/MDA5 and MAVS/IPS-1 in monomeric form as well as in ATG12-ATG5 conjugate. The interaction with MAVS is further enhanced upon vesicular stomatitis virus (VSV) infection. Interacts with ATG3; this interaction is essential for phosphatidylethanolamine (PE)-conjugated ATG8-like proteins formation. Interacts with ATG7. Interacts with ATG10. Interacts with TECPR1. Interacts with SH3BGRL. The ATG12-ATG5 conjugate interacts with PDCD6IP (via the BRO1 domain); this interaction is bridged by ATG12 and promotes multiple PDCD6IP-mediated functions such as endolysosomal trafficking, macroautophagy and exosome biogenesis. In terms of processing, acetylated by EP300.

It is found in the cytoplasm. It localises to the preautophagosomal structure membrane. Ubiquitin-like protein involved in autophagy vesicles formation. Conjugation with ATG5 through a ubiquitin-like conjugating system involving also ATG7 as an E1-like activating enzyme and ATG10 as an E2-like conjugating enzyme, is essential for its function. The ATG12-ATG5 conjugate acts as an E3-like enzyme which is required for lipidation of ATG8 family proteins and their association to the vesicle membranes. The ATG12-ATG5 conjugate also negatively regulates the innate antiviral immune response by blocking the type I IFN production pathway through direct association with RARRES3 and MAVS. Also plays a role in translation or delivery of incoming viral RNA to the translation apparatus. As part of the ATG8 conjugation system with ATG5 and ATG16L1, required for recruitment of LRRK2 to stressed lysosomes and induction of LRRK2 kinase activity in response to lysosomal stress. The protein is Ubiquitin-like protein ATG12 of Pongo abelii (Sumatran orangutan).